A 370-amino-acid polypeptide reads, in one-letter code: 3-dehydroquinate synthase (370 aa).

Residues 112-116 (GVVGD), 136-137 (TS), lysine 149, lysine 158, and 176-179 (TLRT) contribute to the NAD(+) site. Zn(2+) is bound by residues glutamate 191, histidine 254, and histidine 276.

The protein belongs to the sugar phosphate cyclases superfamily. Dehydroquinate synthase family. It depends on NAD(+) as a cofactor. The cofactor is Co(2+). Requires Zn(2+) as cofactor.

Its subcellular location is the cytoplasm. The enzyme catalyses 7-phospho-2-dehydro-3-deoxy-D-arabino-heptonate = 3-dehydroquinate + phosphate. It functions in the pathway metabolic intermediate biosynthesis; chorismate biosynthesis; chorismate from D-erythrose 4-phosphate and phosphoenolpyruvate: step 2/7. Its function is as follows. Catalyzes the conversion of 3-deoxy-D-arabino-heptulosonate 7-phosphate (DAHP) to dehydroquinate (DHQ). The chain is 3-dehydroquinate synthase from Xanthomonas axonopodis pv. citri (strain 306).